The sequence spans 440 residues: tRNA-2-methylthio-N(6)-dimethylallyladenosine synthase (440 aa).

An MTTase N-terminal domain is found at 2 to 117 (KGLYIKTYGC…LPELIVKASR (116 aa)). The [4Fe-4S] cluster site is built by cysteine 11, cysteine 47, cysteine 80, cysteine 157, cysteine 161, and cysteine 164. The region spanning 143-374 (NSQGSSAFLA…QELISKQQLE (232 aa)) is the Radical SAM core domain. The 64-residue stretch at 377 to 440 (QSMIGKTIPV…RQNSLLGCAA (64 aa)) folds into the TRAM domain.

It belongs to the methylthiotransferase family. MiaB subfamily. In terms of assembly, monomer. It depends on [4Fe-4S] cluster as a cofactor.

It is found in the cytoplasm. It carries out the reaction N(6)-dimethylallyladenosine(37) in tRNA + (sulfur carrier)-SH + AH2 + 2 S-adenosyl-L-methionine = 2-methylsulfanyl-N(6)-dimethylallyladenosine(37) in tRNA + (sulfur carrier)-H + 5'-deoxyadenosine + L-methionine + A + S-adenosyl-L-homocysteine + 2 H(+). Catalyzes the methylthiolation of N6-(dimethylallyl)adenosine (i(6)A), leading to the formation of 2-methylthio-N6-(dimethylallyl)adenosine (ms(2)i(6)A) at position 37 in tRNAs that read codons beginning with uridine. The polypeptide is tRNA-2-methylthio-N(6)-dimethylallyladenosine synthase (Wolbachia pipientis subsp. Culex pipiens (strain wPip)).